We begin with the raw amino-acid sequence, 868 residues long: Protein translocase subunit SecA (868 aa).

Residues Gln88, 106–110, and Asp509 contribute to the ATP site; that span reads GEGKT. The segment covering 816-827 has biased composition (polar residues); it reads NAENEPLNYNNQ. The segment at 816–868 is disordered; that stretch reads NAENEPLNYNNQGEDENFTPEKKIPRNAPCPCGSGKKYKDCHGKSGPKKGIFA. Residues Cys845, Cys847, Cys856, and His857 each contribute to the Zn(2+) site.

It belongs to the SecA family. In terms of assembly, monomer and homodimer. Part of the essential Sec protein translocation apparatus which comprises SecA, SecYEG and auxiliary proteins SecDF-YajC and YidC. It depends on Zn(2+) as a cofactor.

The protein localises to the cell inner membrane. It is found in the cytoplasm. It carries out the reaction ATP + H2O + cellular proteinSide 1 = ADP + phosphate + cellular proteinSide 2.. Functionally, part of the Sec protein translocase complex. Interacts with the SecYEG preprotein conducting channel. Has a central role in coupling the hydrolysis of ATP to the transfer of proteins into and across the cell membrane, serving as an ATP-driven molecular motor driving the stepwise translocation of polypeptide chains across the membrane. This is Protein translocase subunit SecA from Campylobacter concisus (strain 13826).